Consider the following 117-residue polypeptide: Ig heavy chain V region UPC10 (117 aa).

The Ig-like domain occupies glutamate 1–serine 116.

The protein is Ig heavy chain V region UPC10 of Mus musculus (Mouse).